Here is a 592-residue protein sequence, read N- to C-terminus: Aspartate--tRNA ligase (592 aa).

Glutamate 173 lines the L-aspartate pocket. Positions 197-200 are aspartate; the sequence is QLFK. Arginine 219 is a binding site for L-aspartate. ATP contacts are provided by residues 219-221 and glutamine 228; that span reads RDE. Histidine 448 lines the L-aspartate pocket. Glutamate 482 contacts ATP. Residue arginine 489 coordinates L-aspartate. 534–537 serves as a coordination point for ATP; sequence GLDR.

Belongs to the class-II aminoacyl-tRNA synthetase family. Type 1 subfamily. Homodimer.

It is found in the cytoplasm. The catalysed reaction is tRNA(Asp) + L-aspartate + ATP = L-aspartyl-tRNA(Asp) + AMP + diphosphate. Its function is as follows. Catalyzes the attachment of L-aspartate to tRNA(Asp) in a two-step reaction: L-aspartate is first activated by ATP to form Asp-AMP and then transferred to the acceptor end of tRNA(Asp). This chain is Aspartate--tRNA ligase, found in Shewanella baltica (strain OS155 / ATCC BAA-1091).